The following is a 75-amino-acid chain: Brevinin-2HS2A (75 aa).

A signal peptide spans 1 to 22; the sequence is MFTLKKPLLLLFFLGTISLSLC. The propeptide occupies 23–40; sequence QEERDADEEEGEMIEEEV. C69 and C75 form a disulfide bridge.

The protein belongs to the frog skin active peptide (FSAP) family. Brevinin subfamily. As to expression, expressed by the skin glands.

It is found in the secreted. In terms of biological role, has antimicrobial activity against some Gram-positive bacteria and fungi but has no activity against a range of Gram-negative bacteria except P.faecalis. Has antimicrobial activity against the Gram-positive bacteria S.aureus ATCC 25923 (MIC=19 uM), B.licheniformis X39 (MIC=37.5 uM) and R.rhodochrous X15 (MIC=9.5 uM), is virtually inactive against E.faecium 091299 (MIC=150 uM) and S.carnosus KHS (MIC=150 uM) and inactive against E.faecalis 981. Active against the Gram-negative bacterium P.faecalis X29 (MIC=9.5 uM) and is inactive against E.coli, P.aeruginosa and S.typhi. Active against C.albicans ATCC 2002 (MIC=19 uM) and is also active against the slime mold 090223 (MIC=37.5 uM). Has extremely low hemolytic activity against human erythrocytes (LC(50)=300 uM). In Odorrana hainanensis (Odor frog), this protein is Brevinin-2HS2A.